A 267-amino-acid chain; its full sequence is 2-keto-3-deoxy-L-rhamnonate aldolase (267 aa).

The Proton acceptor role is filled by His-49. Residue Gln-151 participates in substrate binding. A Mg(2+)-binding site is contributed by Glu-153. Residues Ala-178 and Asp-179 each coordinate substrate. Asp-179 provides a ligand contact to Mg(2+).

It belongs to the HpcH/HpaI aldolase family. KDR aldolase subfamily. Homohexamer. It depends on Mg(2+) as a cofactor.

It carries out the reaction 2-dehydro-3-deoxy-L-rhamnonate = (S)-lactaldehyde + pyruvate. Its function is as follows. Catalyzes the reversible retro-aldol cleavage of 2-keto-3-deoxy-L-rhamnonate (KDR) to pyruvate and lactaldehyde. This is 2-keto-3-deoxy-L-rhamnonate aldolase from Salmonella gallinarum (strain 287/91 / NCTC 13346).